A 244-amino-acid chain; its full sequence is S-adenosyl-L-methionine-dependent Diels-Alderase iliD (244 aa).

This sequence belongs to the class I-like SAM-binding methyltransferase superfamily. Erg6/SMT family. S-adenosyl-L-methionine is required as a cofactor.

The enzyme catalyses 3-[(2E,4E,8S,10E,12Z)-4,8-dimethyltetradeca-2,4,10,12-tetraenoyl]-4-hydroxy-5-(4-hydroxyphenyl)-1,2-dihydropyridin-2-one = ilicicolin H. It functions in the pathway mycotoxin biosynthesis. Functionally, S-adenosyl-l-methionine-dependent Diels-Alderase; part of the gene cluster that mediates the biosynthesis of ilicicolin H, a 4-hydroxy-2-pyridonealkaloid that has potent and broad antifungal activities by inhibiting the mitochondrial respiration chain. IliD catalyzes the Diels-Alder reaction that converts the acyclic 2-pyridone intermediate to 8-epi-ilicicolin H. The biosynthesis of ilicicolin H starts with formation of the tetramic acid by the hybrid PKS-NRPS synthetase iliA with the partnering trans-enoyl reductase iliB since iliA lacks a designated enoylreductase (ER) domain. The cytochrome P450 monooxygenase iliC then catalyzes the ring expansion of the tetramate to the acyclic 2-pyridone. The pericyclase iliD further converts the acyclic 2-pyridone into 8-epi-ilicicolin H. 8-epi-ilicicolin H might then spontaneously convert to ilicicolin H since ilicicolin H is produced in the absence of the epimerase iliE, in contrast to what was observed for the Talaromyces variabilis ilicolin H biosynthetic pathway. This Neonectria sp. (strain DH2) protein is S-adenosyl-L-methionine-dependent Diels-Alderase iliD.